The primary structure comprises 558 residues: N-terminal histidine N-methyltransferase (558 aa).

Residues 1–15 are Cytoplasmic-facing; it reads MAPFRSIYEKDATKK. A helical membrane pass occupies residues 16–32; sequence LVVGAALLVLAAFYSYV. Topologically, residues 33–49 are lumenal; it reads FLLTLAPVYGSTPSHIF. The helical transmembrane segment at 50–65 threads the bilayer; sequence HGYGVGIAGVAGWFSK. Residues 66–77 are Cytoplasmic-facing; it reads DIVDRVSGRKAI. Residues 78-96 traverse the membrane as a helical segment; it reads YAIPVLAFFLPVVQYFVSQ. At 97 to 104 the chain is on the lumenal side; it reads QSSALGNP. Residues 105–131 form a helical membrane-spanning segment; it reads AGPIFTEVLALYPLVLLSVACAGKLVQ. At 132 to 145 the chain is on the cytoplasmic side; it reads AGLNLQRHGDLVAE. A helical membrane pass occupies residues 146–169; it reads HIPLLGSYVIYSAGEHLIKAFLSR. The Lumenal portion of the chain corresponds to 170–172; sequence FIG. The chain crosses the membrane as a helical span at residues 173–194; the sequence is STVLLSRAGLQILIAIFYAAAV. Residues 195-197 are Cytoplasmic-facing; sequence PSK. The helical transmembrane segment at 198-215 threads the bilayer; that stretch reads ALLLAIPAFLFSVTSNTH. Topologically, residues 216-558 are lumenal; the sequence is LPLGHTTTAL…VLPDRVWEGW (343 aa).

It belongs to the methyltransferase superfamily.

The protein localises to the endoplasmic reticulum membrane. The enzyme catalyses L-histidyl-[protein] + S-adenosyl-L-methionine = N(tele)-methyl-L-histidyl-[protein] + S-adenosyl-L-homocysteine + H(+). Functionally, protein-histidine N-methyltransferase that specifically mediates 3-methylhistidine (tele-methylhistidine) methylation at 'His-1', which protects the side-chain from oxidative damage. Methylates lytic polysaccharide monooxygenases (LPMOs) destined for secretion, including AN4702. The chain is N-terminal histidine N-methyltransferase from Emericella nidulans (strain FGSC A4 / ATCC 38163 / CBS 112.46 / NRRL 194 / M139) (Aspergillus nidulans).